The sequence spans 663 residues: Shugoshin 1 (663 aa).

2 coiled-coil regions span residues 8–29 (KQAFQDSLEDIKERMKEKRIKK) and 110–132 (DTAESKLASLKDIIAKVTHNLLE). 3 disordered regions span residues 207–250 (RNTA…MNKN), 278–401 (EHTV…LNSG), and 417–478 (FRQN…ARKN). 4 stretches are compositionally biased toward basic and acidic residues: residues 231–242 (RLEECNNEDKTE), 280–304 (TVVETERPFPTEEFSNESRTDREID), 339–358 (KNKEEPRVGRERVKKGKAER), and 366–394 (KPWENSKPRARSKSRDRSASKKSVAKEKM). A compositionally biased stretch (low complexity) spans 427–437 (NESSLEISSSE). Basic and acidic residues predominate over residues 443 to 453 (SLYKPYKDKSK).

The protein belongs to the shugoshin family. Binds microtubules. Ubiquitinated by the anaphase promoting complex (APC) at the onset of anaphase, conducting to its degradation.

It localises to the nucleus. The protein resides in the chromosome. Its subcellular location is the centromere. It is found in the kinetochore. The protein localises to the nucleus speckle. Its function is as follows. Plays a central role in chromosome cohesion during mitosis by preventing premature dissociation of cohesin complex from centromeres after prophase, when most of cohesin complex dissociates from chromosomes arms. May act by preventing phosphorylation of the stag2 subunit of cohesin complex at the centromere, ensuring cohesin persistence at centromere until cohesin cleavage by espl1/separase at anaphase. May regulate kinetochore microtubule stability in mitosis, possibly to sense tension on mitotic chromosomes. This is Shugoshin 1 from Xenopus laevis (African clawed frog).